Consider the following 561-residue polypeptide: Zinc finger protein with KRAB and SCAN domains 1 (561 aa).

Residues 1 to 51 (MMTAESRETTGLSPQAAQEKDGIVIVKVEEEDEEDHMWGQDSSLQETPPPD) form a disordered region. At serine 13 the chain carries Phosphoserine. Lysine 27 is covalently cross-linked (Glycyl lysine isopeptide (Lys-Gly) (interchain with G-Cter in SUMO2)). The region spanning 56–138 (RQRFRRFCYQ…TLLEDLELDL (83 aa)) is the SCAN box domain. Positions 163–187 (VQESSSFDHHETAQSHFKHSSRKPR) are disordered. Residues 178–187 (HFKHSSRKPR) are compositionally biased toward basic residues. Residues lysine 180 and lysine 226 each participate in a glycyl lysine isopeptide (Lys-Gly) (interchain with G-Cter in SUMO2) cross-link. In terms of domain architecture, KRAB spans 225 to 304 (VKIEDMAVSL…QKEFGEKREQ (80 aa)). Polar residues predominate over residues 260 to 275 (NVFSQGSENRNGNEST). Positions 260-372 (NVFSQGSENR…NTPEEAPSGA (113 aa)) are disordered. Composition is skewed to basic and acidic residues over residues 276 to 286 (SKAEVKEDSTS) and 294 to 349 (FQKE…EKGK). Glycyl lysine isopeptide (Lys-Gly) (interchain with G-Cter in SUMO2) cross-links involve residues lysine 277, lysine 296, lysine 301, and lysine 336. A compositionally biased stretch (polar residues) spans 355-365 (FSLSANFNNTP). Residue lysine 373 forms a Glycyl lysine isopeptide (Lys-Gly) (interchain with G-Cter in SUMO2) linkage. 6 consecutive C2H2-type zinc fingers follow at residues 375 to 397 (HRCD…KIIH), 403 to 425 (YECN…QRIH), 431 to 453 (HECN…QRIH), 459 to 481 (YECN…QRIH), 487 to 509 (YECS…RRIH), and 515 to 537 (YKCT…HRIH). Glycyl lysine isopeptide (Lys-Gly) (interchain with G-Cter in SUMO2) cross-links involve residues lysine 410, lysine 438, and lysine 476. Residue lysine 558 forms a Glycyl lysine isopeptide (Lys-Gly) (interchain with G-Cter in SUMO2) linkage.

It belongs to the krueppel C2H2-type zinc-finger protein family.

Its subcellular location is the nucleus. Its function is as follows. May be involved in transcriptional regulation. This is Zinc finger protein with KRAB and SCAN domains 1 (Zkscan1) from Mus musculus (Mouse).